Consider the following 296-residue polypeptide: Ribosomal protein L11 methyltransferase (296 aa).

S-adenosyl-L-methionine contacts are provided by T151, G172, D194, and N233.

It belongs to the methyltransferase superfamily. PrmA family.

It localises to the cytoplasm. The enzyme catalyses L-lysyl-[protein] + 3 S-adenosyl-L-methionine = N(6),N(6),N(6)-trimethyl-L-lysyl-[protein] + 3 S-adenosyl-L-homocysteine + 3 H(+). Its function is as follows. Methylates ribosomal protein L11. In Dechloromonas aromatica (strain RCB), this protein is Ribosomal protein L11 methyltransferase.